Consider the following 278-residue polypeptide: Large ribosomal subunit protein uL2 (278 aa).

2 disordered regions span residues 1–58 (MAIR…GGGH) and 225–278 (VMNP…KNKR). The span at 37-58 (LHGRGGRNAHGRITTRHKGGGH) shows a compositional bias: basic residues. The segment covering 253 to 267 (PEGRTRKNKASDKLI) has biased composition (basic and acidic residues). A compositionally biased stretch (basic residues) spans 268 to 278 (VRRRRTGKNKR).

The protein belongs to the universal ribosomal protein uL2 family. Part of the 50S ribosomal subunit. Forms a bridge to the 30S subunit in the 70S ribosome.

Functionally, one of the primary rRNA binding proteins. Required for association of the 30S and 50S subunits to form the 70S ribosome, for tRNA binding and peptide bond formation. It has been suggested to have peptidyltransferase activity; this is somewhat controversial. Makes several contacts with the 16S rRNA in the 70S ribosome. In Rhodococcus opacus (strain B4), this protein is Large ribosomal subunit protein uL2.